The following is a 185-amino-acid chain: Putative manganese efflux pump MntP (185 aa).

Transmembrane regions (helical) follow at residues 3-23 (IFTL…VSLA), 40-60 (LLFV…VSVI), 64-84 (FDAY…LRMI), 102-122 (TFSR…AVGI), 124-144 (LSLA…FVLI), and 165-185 (EIFG…DAMM).

It belongs to the MntP (TC 9.B.29) family.

The protein resides in the cell inner membrane. Functionally, probably functions as a manganese efflux pump. In Elusimicrobium minutum (strain Pei191), this protein is Putative manganese efflux pump MntP.